We begin with the raw amino-acid sequence, 444 residues long: MVKNHNPKNEMQDMLTPLDAEEAAKTKLRLDMREIPKSSIKPEHFHLMYLLEQHSPYFIDAELTELRDSFQIHYDINDNHTPFDNIKSFTKNEKLRYLLNIKNLEEVNRTRYTFVLAPDELFFTRDGLPIAKTRGLQNVVDPLPVSEAEFLTRYKALVICAFNEKQSFDALVEGNLELHKGTPFETKVIEAATLDLLTAFLDEQYQKQEQDYSQNYAYVRKVGHTVFKWVAIGMTTLSVLLIAFLAFLYFSVMKHNERIEKGYQAFVKDDYTQVLNTYDDLDGKKLDKEALYIYAKSYIQTNKQGLEKDKKENLLNNVTPNSNKDYLLYWMELGQGHLDEAINIATYLDDNDITKLALINKLNEIKNNGDLSNDKRSEETKKYNDKLQDILDKEKQVKDEKAKSEEEKAKAKDEKLKQQEENEKKQKEQAQKDKEKRQEAERKK.

At 1–229 (MVKNHNPKNE…RKVGHTVFKW (229 aa)) the chain is on the cytoplasmic side. A helical membrane pass occupies residues 230 to 250 (VAIGMTTLSVLLIAFLAFLYF). The Extracellular portion of the chain corresponds to 251–444 (SVMKHNERIE…EKRQEAERKK (194 aa)). The interval 366–444 (KNNGDLSNDK…EKRQEAERKK (79 aa)) is disordered. Over residues 372-444 (SNDKRSEETK…EKRQEAERKK (73 aa)) the composition is skewed to basic and acidic residues. A coiled-coil region spans residues 387–443 (LQDILDKEKQVKDEKAKSEEEKAKAKDEKLKQQEENEKKQKEQAQKDKEKRQEAERK).

Belongs to the EssB family. As to quaternary structure, may oligomerize and interact with other membrane components to form the Ess system. Interacts with EsaA.

It is found in the cell membrane. Its function is as follows. Component of the type VII secretion system (Ess). Required for the secretion of EsxA and proper accumulation of EssB and EssD. This Staphylococcus aureus (strain USA300) protein is Type VII secretion system protein EssB.